The chain runs to 81 residues: Exodeoxyribonuclease 7 small subunit (81 aa).

The tract at residues 59–81 is disordered; the sequence is KLVDKDGNEKTLDPQNASAPEEE. Over residues 60-70 the composition is skewed to basic and acidic residues; the sequence is LVDKDGNEKTL. Polar residues predominate over residues 71–81; sequence DPQNASAPEEE.

It belongs to the XseB family. As to quaternary structure, heterooligomer composed of large and small subunits.

It is found in the cytoplasm. It carries out the reaction Exonucleolytic cleavage in either 5'- to 3'- or 3'- to 5'-direction to yield nucleoside 5'-phosphates.. Bidirectionally degrades single-stranded DNA into large acid-insoluble oligonucleotides, which are then degraded further into small acid-soluble oligonucleotides. This is Exodeoxyribonuclease 7 small subunit from Lactobacillus gasseri (strain ATCC 33323 / DSM 20243 / BCRC 14619 / CIP 102991 / JCM 1131 / KCTC 3163 / NCIMB 11718 / NCTC 13722 / AM63).